A 332-amino-acid polypeptide reads, in one-letter code: Fructose-1,6-bisphosphatase class 1 (332 aa).

Residues glutamate 89, aspartate 110, leucine 112, and aspartate 113 each coordinate Mg(2+). Residues 113-116 (DGSS), asparagine 206, tyrosine 239, 257-259 (YLY), and lysine 269 contribute to the substrate site. Position 275 (glutamate 275) interacts with Mg(2+).

It belongs to the FBPase class 1 family. In terms of assembly, homotetramer. It depends on Mg(2+) as a cofactor.

It is found in the cytoplasm. The catalysed reaction is beta-D-fructose 1,6-bisphosphate + H2O = beta-D-fructose 6-phosphate + phosphate. It participates in carbohydrate biosynthesis; gluconeogenesis. This Escherichia coli (strain ATCC 8739 / DSM 1576 / NBRC 3972 / NCIMB 8545 / WDCM 00012 / Crooks) protein is Fructose-1,6-bisphosphatase class 1.